The following is a 173-amino-acid chain: Crossover junction endodeoxyribonuclease RuvC (173 aa).

Active-site residues include aspartate 8, glutamate 69, and aspartate 141. Mg(2+) contacts are provided by aspartate 8, glutamate 69, and aspartate 141.

This sequence belongs to the RuvC family. Homodimer which binds Holliday junction (HJ) DNA. The HJ becomes 2-fold symmetrical on binding to RuvC with unstacked arms; it has a different conformation from HJ DNA in complex with RuvA. In the full resolvosome a probable DNA-RuvA(4)-RuvB(12)-RuvC(2) complex forms which resolves the HJ. Mg(2+) is required as a cofactor.

The protein resides in the cytoplasm. It carries out the reaction Endonucleolytic cleavage at a junction such as a reciprocal single-stranded crossover between two homologous DNA duplexes (Holliday junction).. The RuvA-RuvB-RuvC complex processes Holliday junction (HJ) DNA during genetic recombination and DNA repair. Endonuclease that resolves HJ intermediates. Cleaves cruciform DNA by making single-stranded nicks across the HJ at symmetrical positions within the homologous arms, yielding a 5'-phosphate and a 3'-hydroxyl group; requires a central core of homology in the junction. The consensus cleavage sequence is 5'-(A/T)TT(C/G)-3'. Cleavage occurs on the 3'-side of the TT dinucleotide at the point of strand exchange. HJ branch migration catalyzed by RuvA-RuvB allows RuvC to scan DNA until it finds its consensus sequence, where it cleaves and resolves the cruciform DNA. In Xylella fastidiosa (strain 9a5c), this protein is Crossover junction endodeoxyribonuclease RuvC.